The primary structure comprises 242 residues: 2-C-methyl-D-erythritol 4-phosphate cytidylyltransferase (242 aa).

Belongs to the IspD/TarI cytidylyltransferase family. IspD subfamily.

It catalyses the reaction 2-C-methyl-D-erythritol 4-phosphate + CTP + H(+) = 4-CDP-2-C-methyl-D-erythritol + diphosphate. Its pathway is isoprenoid biosynthesis; isopentenyl diphosphate biosynthesis via DXP pathway; isopentenyl diphosphate from 1-deoxy-D-xylulose 5-phosphate: step 2/6. Its function is as follows. Catalyzes the formation of 4-diphosphocytidyl-2-C-methyl-D-erythritol from CTP and 2-C-methyl-D-erythritol 4-phosphate (MEP). The chain is 2-C-methyl-D-erythritol 4-phosphate cytidylyltransferase from Shewanella loihica (strain ATCC BAA-1088 / PV-4).